We begin with the raw amino-acid sequence, 290 residues long: Putative beta-lactamase HcpC (290 aa).

The N-terminal stretch at 1–25 is a signal peptide; the sequence is MLENVKKSFFRVLCLGALCLGGLMA. 7 TPR repeats span residues 29-62, 64-98, 100-133, 134-170, 172-205, 206-242, and 244-278; these read PKELVGLGAKSYKEKDFTQAKKYFEKACDLKENS, CFNLGVLYYQGQGVEKNLKKAASFYAKACDLNYSN, CHLLGNLYYSGQGVSQNTNKALQYYSKACDLKYA, EGCASLGGIYHDGKVVTRDFKKAVEYFTKACDLNDGD, CTILGSLYDAGRGTPKDLKKALASYDKACDLKDS, PGCFNAGNMYHHGEGATKNFKEALARYSKACELENGG, and CFNLGAMQYNGEGVTRNEKQAIENFKKGCKLGAKG. Cystine bridges form between cysteine 56-cysteine 64, cysteine 92-cysteine 100, cysteine 128-cysteine 136, cysteine 164-cysteine 172, cysteine 200-cysteine 208, cysteine 236-cysteine 244, and cysteine 272-cysteine 280.

This sequence belongs to the hcp beta-lactamase family.

It is found in the secreted. The catalysed reaction is a beta-lactam + H2O = a substituted beta-amino acid. Functionally, may hydrolyze 6-aminopenicillinic acid and 7-aminocephalosporanic acid (ACA) derivatives. The chain is Putative beta-lactamase HcpC (hcpC) from Helicobacter pylori (strain ATCC 700392 / 26695) (Campylobacter pylori).